The sequence spans 95 residues: Microcin E492 immunity protein (95 aa).

The next 3 helical transmembrane spans lie at 1 to 21 (MTLLSFGFSPVFFSVMAFCII), 35 to 55 (VIVLILLTFFICFLYPLTKVY), and 67 to 87 (YLFCFISTLIAIAINVVILTI).

The protein belongs to the MceB microcin immunity protein family.

It is found in the cell inner membrane. Functionally, protect the producing cell against microcin E492. This chain is Microcin E492 immunity protein, found in Klebsiella pneumoniae.